A 301-amino-acid chain; its full sequence is Bifunctional protein FolD (301 aa).

Residues 164-166 (GRS), serine 191, and isoleucine 232 contribute to the NADP(+) site.

It belongs to the tetrahydrofolate dehydrogenase/cyclohydrolase family. As to quaternary structure, homodimer.

It carries out the reaction (6R)-5,10-methylene-5,6,7,8-tetrahydrofolate + NADP(+) = (6R)-5,10-methenyltetrahydrofolate + NADPH. It catalyses the reaction (6R)-5,10-methenyltetrahydrofolate + H2O = (6R)-10-formyltetrahydrofolate + H(+). Its pathway is one-carbon metabolism; tetrahydrofolate interconversion. Its function is as follows. Catalyzes the oxidation of 5,10-methylenetetrahydrofolate to 5,10-methenyltetrahydrofolate and then the hydrolysis of 5,10-methenyltetrahydrofolate to 10-formyltetrahydrofolate. The polypeptide is Bifunctional protein FolD (Borreliella afzelii (strain PKo) (Borrelia afzelii)).